Consider the following 164-residue polypeptide: ATP synthase subunit b (164 aa).

Residues 8-28 (IGLFFWQTIVFLILLFLMAKF) traverse the membrane as a helical segment.

Belongs to the ATPase B chain family. F-type ATPases have 2 components, F(1) - the catalytic core - and F(0) - the membrane proton channel. F(1) has five subunits: alpha(3), beta(3), gamma(1), delta(1), epsilon(1). F(0) has three main subunits: a(1), b(2) and c(10-14). The alpha and beta chains form an alternating ring which encloses part of the gamma chain. F(1) is attached to F(0) by a central stalk formed by the gamma and epsilon chains, while a peripheral stalk is formed by the delta and b chains.

It is found in the cell membrane. Functionally, f(1)F(0) ATP synthase produces ATP from ADP in the presence of a proton or sodium gradient. F-type ATPases consist of two structural domains, F(1) containing the extramembraneous catalytic core and F(0) containing the membrane proton channel, linked together by a central stalk and a peripheral stalk. During catalysis, ATP synthesis in the catalytic domain of F(1) is coupled via a rotary mechanism of the central stalk subunits to proton translocation. In terms of biological role, component of the F(0) channel, it forms part of the peripheral stalk, linking F(1) to F(0). This Christiangramia forsetii (strain DSM 17595 / CGMCC 1.15422 / KT0803) (Gramella forsetii) protein is ATP synthase subunit b.